We begin with the raw amino-acid sequence, 261 residues long: tRNA pseudouridine synthase A (261 aa).

Aspartate 51 acts as the Nucleophile in catalysis. Tyrosine 109 contacts substrate.

It belongs to the tRNA pseudouridine synthase TruA family. As to quaternary structure, homodimer.

The catalysed reaction is uridine(38/39/40) in tRNA = pseudouridine(38/39/40) in tRNA. Functionally, formation of pseudouridine at positions 38, 39 and 40 in the anticodon stem and loop of transfer RNAs. This Shewanella amazonensis (strain ATCC BAA-1098 / SB2B) protein is tRNA pseudouridine synthase A.